The chain runs to 446 residues: Iroquois-class homeodomain protein IRX-6 (446 aa).

The homeobox DNA-binding region spans 146–208 (GAGRRKNATR…NARRRLKKEN (63 aa)). Disordered stretches follow at residues 208 to 273 (NKMT…EDEE) and 362 to 394 (AVEG…RLSV). Over residues 217–226 (KGGEERKAEG) the composition is skewed to basic and acidic residues. Positions 256–273 (LEDLEEEEEEEEEAEDEE) are enriched in acidic residues.

The protein belongs to the TALE/IRO homeobox family.

It is found in the nucleus. In terms of biological role, transcription factor. Binds to the iroquois binding site (IBS) motif of target genes to regulate gene expression; functions as a transcriptional activator or repressor. Modulates expression of RCVRN, VSX1, BHLHE22/BHLHB5 and TACR3/Nk3r. Required downstream of retinal bipolar cell specification for the terminal differentiation of type 2, type 3a and possibly type 6 bipolar cells. The chain is Iroquois-class homeodomain protein IRX-6 (IRX6) from Homo sapiens (Human).